A 253-amino-acid polypeptide reads, in one-letter code: 3-deoxy-manno-octulosonate cytidylyltransferase (253 aa).

This sequence belongs to the KdsB family.

It is found in the cytoplasm. The catalysed reaction is 3-deoxy-alpha-D-manno-oct-2-ulosonate + CTP = CMP-3-deoxy-beta-D-manno-octulosonate + diphosphate. The protein operates within nucleotide-sugar biosynthesis; CMP-3-deoxy-D-manno-octulosonate biosynthesis; CMP-3-deoxy-D-manno-octulosonate from 3-deoxy-D-manno-octulosonate and CTP: step 1/1. It functions in the pathway bacterial outer membrane biogenesis; lipopolysaccharide biosynthesis. Its function is as follows. Activates KDO (a required 8-carbon sugar) for incorporation into bacterial lipopolysaccharide in Gram-negative bacteria. In Neisseria meningitidis serogroup A / serotype 4A (strain DSM 15465 / Z2491), this protein is 3-deoxy-manno-octulosonate cytidylyltransferase.